The sequence spans 482 residues: Zinc finger protein 385B (482 aa).

Residues 1 to 105 (MNMATFLRGF…TGSACHTTTL (105 aa)) form a required for induction of apoptosis region. 2 consecutive Matrin-type zinc fingers follow at residues 34-64 (SFCE…RVKQ) and 169-199 (ISCN…KVKA). 3 disordered regions span residues 54–75 (DGKS…PPVQ), 189–259 (KGSK…SFLL), and 268–287 (LGAI…SVAE). Residues 106–482 (PALVRTPTLM…TPASILFAPY (377 aa)) form an interaction with p53/TP53 region. Positions 231–240 (SSDKSEDKGK) are enriched in basic and acidic residues. The Matrin-type 3 zinc-finger motif lies at 294 to 328 (KKLLYCSLCKVAVNSLSQLEAHNTGSKHKTMVEAR). 2 disordered regions span residues 331–352 (AGPI…GSKG) and 378–397 (HISS…KPKY). The Matrin-type 4 zinc finger occupies 360–390 (FHCEICDVHVNSEIQLKQHISSRRHKDRVAG).

In terms of assembly, interacts with p53/TP53; the interaction is direct.

The protein localises to the nucleus. Its function is as follows. May play a role in p53/TP53-mediated apoptosis. The protein is Zinc finger protein 385B (Znf385b) of Mus musculus (Mouse).